The following is a 51-amino-acid chain: Large ribosomal subunit protein eL39 (51 aa).

Belongs to the eukaryotic ribosomal protein eL39 family.

The polypeptide is Large ribosomal subunit protein eL39 (rpl39e) (Aeropyrum pernix (strain ATCC 700893 / DSM 11879 / JCM 9820 / NBRC 100138 / K1)).